The following is a 343-amino-acid chain: Holliday junction branch migration complex subunit RuvB (343 aa).

Positions 1–181 (MDRIIDTAAT…FGIVQRLEFY (181 aa)) are large ATPase domain (RuvB-L). ATP-binding positions include Ile20, Arg21, Gly62, Lys65, Thr66, Thr67, 128–130 (EDF), Arg171, Tyr181, and Arg218. Thr66 is a binding site for Mg(2+). The interval 182-252 (SPEDLARIVR…VAQAAMQMLK (71 aa)) is small ATPAse domain (RuvB-S). A head domain (RuvB-H) region spans residues 255–343 (QGGFDELDRR…SAFTDPEDLF (89 aa)). 3 residues coordinate DNA: Arg291, Arg310, and Arg315.

The protein belongs to the RuvB family. In terms of assembly, homohexamer. Forms an RuvA(8)-RuvB(12)-Holliday junction (HJ) complex. HJ DNA is sandwiched between 2 RuvA tetramers; dsDNA enters through RuvA and exits via RuvB. An RuvB hexamer assembles on each DNA strand where it exits the tetramer. Each RuvB hexamer is contacted by two RuvA subunits (via domain III) on 2 adjacent RuvB subunits; this complex drives branch migration. In the full resolvosome a probable DNA-RuvA(4)-RuvB(12)-RuvC(2) complex forms which resolves the HJ.

Its subcellular location is the cytoplasm. The enzyme catalyses ATP + H2O = ADP + phosphate + H(+). Its function is as follows. The RuvA-RuvB-RuvC complex processes Holliday junction (HJ) DNA during genetic recombination and DNA repair, while the RuvA-RuvB complex plays an important role in the rescue of blocked DNA replication forks via replication fork reversal (RFR). RuvA specifically binds to HJ cruciform DNA, conferring on it an open structure. The RuvB hexamer acts as an ATP-dependent pump, pulling dsDNA into and through the RuvAB complex. RuvB forms 2 homohexamers on either side of HJ DNA bound by 1 or 2 RuvA tetramers; 4 subunits per hexamer contact DNA at a time. Coordinated motions by a converter formed by DNA-disengaged RuvB subunits stimulates ATP hydrolysis and nucleotide exchange. Immobilization of the converter enables RuvB to convert the ATP-contained energy into a lever motion, pulling 2 nucleotides of DNA out of the RuvA tetramer per ATP hydrolyzed, thus driving DNA branch migration. The RuvB motors rotate together with the DNA substrate, which together with the progressing nucleotide cycle form the mechanistic basis for DNA recombination by continuous HJ branch migration. Branch migration allows RuvC to scan DNA until it finds its consensus sequence, where it cleaves and resolves cruciform DNA. The chain is Holliday junction branch migration complex subunit RuvB from Xylella fastidiosa (strain 9a5c).